Reading from the N-terminus, the 80-residue chain is Defensin-like protein 44 (80 aa).

An N-terminal signal peptide occupies residues 1–27 (MAITKTSVTLLLLIIMAASLSNFSVLA). 4 disulfides stabilise this stretch: Cys40–Cys79, Cys44–Cys67, Cys53–Cys77, and Cys57–Cys78.

This sequence belongs to the DEFL family.

The protein localises to the secreted. The sequence is that of Defensin-like protein 44 from Arabidopsis thaliana (Mouse-ear cress).